Consider the following 23-residue polypeptide: Acidic phospholipase A2 Ts-A5 (23 aa).

Requires Ca(2+) as cofactor. Contains 7 disulfide bonds. Expressed by the venom gland.

The protein resides in the secreted. It carries out the reaction a 1,2-diacyl-sn-glycero-3-phosphocholine + H2O = a 1-acyl-sn-glycero-3-phosphocholine + a fatty acid + H(+). In terms of biological role, snake venom phospholipase A2 (PLA2) that shows a moderate inhibition of ADP-induced human platelet aggregation when tested on platelet rich plasma. Exhibits high hydrolytic activities and prefers the anionic micelles (dPPC with deoxycholate) to the zwitterionic micelles (dPPC with Triton X-100). PLA2 catalyzes the calcium-dependent hydrolysis of the 2-acyl groups in 3-sn-phosphoglycerides. The sequence is that of Acidic phospholipase A2 Ts-A5 from Trimeresurus stejnegeri (Chinese green tree viper).